Consider the following 243-residue polypeptide: Probable septum site-determining protein MinC (243 aa).

Belongs to the MinC family. In terms of assembly, interacts with MinD and FtsZ.

Cell division inhibitor that blocks the formation of polar Z ring septums. Rapidly oscillates between the poles of the cell to destabilize FtsZ filaments that have formed before they mature into polar Z rings. Prevents FtsZ polymerization. This chain is Probable septum site-determining protein MinC, found in Wigglesworthia glossinidia brevipalpis.